The sequence spans 344 residues: Palmitoyltransferase ZDHHC4 (344 aa).

The Lumenal portion of the chain corresponds to Met1–Asp2. A helical transmembrane segment spans residues Phe3–Val23. Topologically, residues Cys24–Thr67 are cytoplasmic. The chain crosses the membrane as a helical span at residues Phe68 to Phe88. Residues Gly89–His99 lie on the Lumenal side of the membrane. A helical membrane pass occupies residues Tyr100–Gly120. The Cytoplasmic portion of the chain corresponds to Thr121–Arg192. The region spanning Val149–Leu199 is the DHHC domain. Cys179 serves as the catalytic S-palmitoyl cysteine intermediate. A helical transmembrane segment spans residues Tyr193–Thr213. Residues Thr214–Arg255 lie on the Lumenal side of the membrane. Residues Ile256–Phe276 traverse the membrane as a helical segment. The Cytoplasmic segment spans residues Val277–Glu344. A Di-lysine motif motif is present at residues Lys341–Glu344.

Belongs to the DHHC palmitoyltransferase family. Interacts with CPT1A.

It is found in the endoplasmic reticulum membrane. It localises to the golgi apparatus membrane. Its subcellular location is the cell membrane. It catalyses the reaction L-cysteinyl-[protein] + hexadecanoyl-CoA = S-hexadecanoyl-L-cysteinyl-[protein] + CoA. Palmitoyltransferase that catalyzes the addition of palmitate onto protein substrates including the D(2) dopamine receptor DRD2, GSK3B or MAVS. Mediates GSK3B palmitoylation to prevent its AKT1-mediated phosphorylation leading to activation of the STAT3 signaling pathway. Also catalyzes MAVS palmitoylation which promotes its stabilization and activation by inhibiting 'Lys-48'- but facilitating 'Lys-63'-linked ubiquitination. The sequence is that of Palmitoyltransferase ZDHHC4 from Homo sapiens (Human).